A 141-amino-acid chain; its full sequence is Large ribosomal subunit protein uL11 (141 aa).

It belongs to the universal ribosomal protein uL11 family. Part of the ribosomal stalk of the 50S ribosomal subunit. Interacts with L10 and the large rRNA to form the base of the stalk. L10 forms an elongated spine to which L12 dimers bind in a sequential fashion forming a multimeric L10(L12)X complex. Post-translationally, one or more lysine residues are methylated.

Functionally, forms part of the ribosomal stalk which helps the ribosome interact with GTP-bound translation factors. This chain is Large ribosomal subunit protein uL11, found in Petrotoga mobilis (strain DSM 10674 / SJ95).